A 515-amino-acid polypeptide reads, in one-letter code: Alpha,alpha-trehalose-phosphate synthase [UDP-forming] 1 (515 aa).

Residues Tyr97 and Asp151 each coordinate D-glucose 6-phosphate. The UDP site is built by Arg287 and Lys292. Arg287 and Lys292 together coordinate UDP-alpha-D-glucose. Residue Arg325 coordinates D-glucose 6-phosphate. Residues Val364 and 390–394 (LVAYE) contribute to the UDP site. 386 to 394 (DGMNLVAYE) serves as a coordination point for UDP-alpha-D-glucose. Positions 483–515 (GKFQSRKAKLPESADAEKPMNGSGESEESQTTQ) are disordered. Basic and acidic residues predominate over residues 491–500 (KLPESADAEK).

The protein belongs to the glycosyltransferase 20 family.

It catalyses the reaction D-glucose 6-phosphate + UDP-alpha-D-glucose = alpha,alpha-trehalose 6-phosphate + UDP + H(+). The protein operates within carbohydrate biosynthesis. Functionally, synthase catalytic subunit of the trehalose synthase complex that catalyzes the production of trehalose from glucose-6-phosphate and UDP-alpha-D-glucose in a two step process. The disaccharide trehalose serves as a storage carbohydrate that is mobilized during conidial germination. Regulates the level of trehalose as a protectant for cell integrity during thermal and oxidative stress. The polypeptide is Alpha,alpha-trehalose-phosphate synthase [UDP-forming] 1 (Aspergillus fumigatus (strain ATCC MYA-4609 / CBS 101355 / FGSC A1100 / Af293) (Neosartorya fumigata)).